The sequence spans 164 residues: Microfibrillar-associated protein 5 (164 aa).

A signal peptide spans 1 to 28 (MLFLGQKALLLVLAISIPSDWLPLGVSG). Positions 30-32 (RGD) match the Cell attachment site motif. N-linked (GlcNAc...) asparagine glycosylation occurs at N70.

This sequence belongs to the MFAP family. Interacts with TGFB2. Interacts with BMP2. Interacts with FBN1 (via N-terminal domain) and FBN2. Forms intermolecular disulfide bonds either with other MAGP-2 molecules or with other components of the microfibrils.

It is found in the secreted. The protein resides in the extracellular space. It localises to the extracellular matrix. In terms of biological role, may play a role in hematopoiesis. In the cardiovascular system, could regulate growth factors or participate in cell signaling in maintaining large vessel integrity. Component of the elastin-associated microfibrils. The protein is Microfibrillar-associated protein 5 (Mfap5) of Mus musculus (Mouse).